Here is a 453-residue protein sequence, read N- to C-terminus: Putative sodium-coupled neutral amino acid transporter 11 (453 aa).

Residues 1–34 (MSYQQPQLRGPLQRETDPSDRESLVSGHEHGGKS) form a disordered region. The segment covering 12–32 (LQRETDPSDRESLVSGHEHGG) has biased composition (basic and acidic residues). Helical transmembrane passes span 39–59 (AVFN…PYSM), 66–86 (LGIL…VLLI), 106–126 (GFPG…IAMI), 152–172 (FISR…PLSL), 179–199 (LGKI…VVVT), 222–242 (AIQA…CFLV), 262–282 (ILVS…TFTG), 299–319 (VTFG…IECF), 337–357 (VFHV…SLLI), 359–379 (CLGI…IFII), and 399–419 (MACV…VMAI).

It belongs to the amino acid/polyamine transporter 2 family. In terms of tissue distribution, widely expressed.

The protein resides in the membrane. Functionally, putative sodium-dependent amino acid/proton antiporter. The polypeptide is Putative sodium-coupled neutral amino acid transporter 11 (Slc38a11) (Rattus norvegicus (Rat)).